The following is a 183-amino-acid chain: MILGDRDLKYYLEKGWIKIDPLREDTVRENGVDLRVGGEIARFIKTDKVFDPDNPDPAFFKIEKIEEFIIQPYEHVLLTTEEYIELPNDVMAFVNLRSSFARLGLFIPPTIVDAGFKGQITIEVVGSSFPVLLRRGTRFIHLIFARTLSPVEHPYQGKYQGQKGVTLPKFRTEASKFLSLHQK.

DCTP contacts are provided by residues 97–102 (RSSFAR) and D113. E123 (proton donor/acceptor) is an active-site residue. Y155 and Q162 together coordinate dCTP.

This sequence belongs to the dCTP deaminase family. In terms of assembly, homotrimer.

The enzyme catalyses dCTP + H2O + H(+) = dUTP + NH4(+). It functions in the pathway pyrimidine metabolism; dUMP biosynthesis; dUMP from dCTP (dUTP route): step 1/2. Functionally, catalyzes the deamination of dCTP to dUTP. This chain is dCTP deaminase, found in Sulfurisphaera tokodaii (strain DSM 16993 / JCM 10545 / NBRC 100140 / 7) (Sulfolobus tokodaii).